We begin with the raw amino-acid sequence, 218 residues long: DNA replication complex GINS protein psf3 (218 aa).

Over residues 147-163 (GGGSSYHGRDGGGAGGK) the composition is skewed to gly residues. A disordered region spans residues 147–182 (GGGSSYHGRDGGGAGGKGKGKATKDDNASNLGVGGA).

It belongs to the GINS3/PSF3 family. In terms of assembly, component of the GINS complex which is a heterotetramer of div-26/sld5, drc-1/psf1, drc-2/psf2 and drc-3/psf3.

It localises to the nucleus. Its function is as follows. The GINS complex plays an essential role in the initiation of DNA replication. The chain is DNA replication complex GINS protein psf3 (drc-3) from Neurospora crassa (strain ATCC 24698 / 74-OR23-1A / CBS 708.71 / DSM 1257 / FGSC 987).